Here is a 422-residue protein sequence, read N- to C-terminus: Synaptotagmin-1 (422 aa).

Residues 1–57 (MVSESHHEALAAPPVTTVATVLPHNATEPASPGEGKEDAFSKLKEKFMNELHKIPLP) are Vesicular-facing. The N-linked (GlcNAc...) asparagine glycan is linked to Asn25. The helical transmembrane segment at 58-80 (PWALIAIAIVAVLLVLTCCFCIC) threads the bilayer. Residues Cys75, Cys76, Cys78, Cys80, and Cys83 are each lipidated (S-palmitoyl cysteine). Topologically, residues 81–422 (KKCLFKKKNK…EVDAMLAVKK (342 aa)) are cytoplasmic. The disordered stretch occupies residues 113–142 (TMKDQALKDDDAETGLTDGEEKEEPKEEEK). Residues 122-134 (DDAETGLTDGEEK) show a composition bias toward acidic residues. Residue Thr129 is modified to Phosphothreonine. Residues 136 to 382 (EPKEEEKLGK…AIGKVFVGYN (247 aa)) form a phospholipid binding region. The C2 1 domain occupies 142–261 (KLGKLQYSLD…DFGHVTEEWR (120 aa)). Residues Leu172, Asp173, and Asp179 each contribute to the Ca(2+) site. Tyr230 carries the post-translational modification Phosphotyrosine. Asp231, Phe232, Asp233, Ser236, Lys237, and Asp239 together coordinate Ca(2+). The residue at position 265 (Ser265) is a Phosphoserine. Positions 273 to 406 (KLGDICFSLR…NPRRPIAQWH (134 aa)) constitute a C2 2 domain. Ca(2+) contacts are provided by Asp304 and Asp310. Residues Ser343 and Ser345 each carry the phosphoserine modification. Residues Asp364, Asp366, and Asp372 each coordinate Ca(2+).

This sequence belongs to the synaptotagmin family. As to quaternary structure, homotetramer. Heterodimer; heterodimerizes with SYT2 in presence of calcium. Interacts with SCAMP5. Interacts with STON2. Forms a complex with SV2B, syntaxin 1 and SNAP25. Interacts with SV2A, SV2B and SV2C. Interacts with RIMS1. Interacts with PRRT2. Interacts with DNAJC5 in a phosphorylation-dependent manner. Interacts (via N-terminus) with RAB3A. Interacts with SYT12. Interacts with calmodulin. Interacts with DNM1 (via C-terminal proline-rich domain (PRD)); this interaction facilitates vesicle fission during clathrin-mediated endocytosis (CME). It depends on Ca(2+) as a cofactor. Glycosylated.

Its subcellular location is the cytoplasmic vesicle. The protein resides in the secretory vesicle membrane. It localises to the secretory vesicle. It is found in the synaptic vesicle membrane. The protein localises to the chromaffin granule membrane. Its subcellular location is the cytoplasm. In terms of biological role, calcium sensor that participates in triggering neurotransmitter release at the synapse. May have a regulatory role in the membrane interactions during trafficking of synaptic vesicles at the active zone of the synapse. It binds acidic phospholipids with a specificity that requires the presence of both an acidic head group and a diacyl backbone. A Ca(2+)-dependent interaction between synaptotagmin and putative receptors for activated protein kinase C has also been reported. It can bind to at least three additional proteins in a Ca(2+)-independent manner; these are neurexins, syntaxin and AP2. Plays a role in dendrite formation by melanocytes. This is Synaptotagmin-1 from Bos taurus (Bovine).